The following is a 262-amino-acid chain: 5'-nucleotidase SurE (262 aa).

4 residues coordinate a divalent metal cation: Asp-11, Asp-12, Ser-43, and Asn-101.

It belongs to the SurE nucleotidase family. A divalent metal cation is required as a cofactor.

It localises to the cytoplasm. The enzyme catalyses a ribonucleoside 5'-phosphate + H2O = a ribonucleoside + phosphate. Nucleotidase that shows phosphatase activity on nucleoside 5'-monophosphates. The sequence is that of 5'-nucleotidase SurE from Prochlorococcus marinus (strain NATL2A).